A 105-amino-acid polypeptide reads, in one-letter code: UPF0166 protein aq_450 (105 aa).

This sequence belongs to the UPF0166 family.

This is UPF0166 protein aq_450 from Aquifex aeolicus (strain VF5).